A 583-amino-acid polypeptide reads, in one-letter code: Immunity-related GTPase family Q protein (583 aa).

The cysteines at positions 152 and 158 are disulfide-linked. Positions 155 to 179 (SDRCEELERLQVVLRTQAEALQRLL) form a coiled coil. Positions 186-189 (FEVL) match the LIR 1 motif. T203 carries the phosphothreonine modification. The IRG-type G domain occupies 223 to 409 (ARLDLAVAGT…PGLGTWLQHA (187 aa)). Residues 322–373 (APLVGVRTDGQGEDPPEVLEEEKAQNASDGNSGDARSEGKKAGIGDSGCTAA) are disordered. The segment covering 332 to 341 (QGEDPPEVLE) has biased composition (acidic residues). Residues 381-384 (WEVL) carry the LIR 2 motif.

This sequence belongs to the TRAFAC class dynamin-like GTPase superfamily. IRG family. In terms of assembly, interacts (via LIR motif 1) with GABARAPL2. Interacts (via LIR motif 2) with MAP1LC3B/LC3B.

It is found in the lysosome. It localises to the cytoplasmic vesicle. The protein resides in the autophagosome. In terms of biological role, autophagy receptor that specifically promotes clearance of misfolded MHC class I molecules by targeting them to the lysosome for degradation. Acts as a molecular adapter that specifically recognizes and binds (1) misfolded MHC class I molecules following their ubiquitination, as well as (2) autophagy-related proteins, promoting the recruitment of misfolded MHC class I molecules to autophagy machinery for degradation. Degradation of misfolded MHC class I molecules is essential to prevent accumulation of defective MHC class I complexes at the surface of CD8(+) T-cells and prevent a stronger T-cell-mediated response. In contrast to other members of the family, does not show GTPase activity. This Mus musculus (Mouse) protein is Immunity-related GTPase family Q protein (Irgq).